Consider the following 182-residue polypeptide: MKLADVEDHMQKSVEATQRAFNTIRTGRANTSLLDRVTVEYYGAETPLRSLANISTPDSSTIAIQPFDRNSLNLIEKAISMSDLGLTPNNDGTVIRLNIPPLTSDRRKELVKTASKLAEEGKVSIRNVRRDAVDSVKKQGKAGELSEDEVKDLQDKIQKLTDKYIAKVDGLLAEKEKDISTV.

The protein belongs to the RRF family.

The protein resides in the cytoplasm. Responsible for the release of ribosomes from messenger RNA at the termination of protein biosynthesis. May increase the efficiency of translation by recycling ribosomes from one round of translation to another. In Cyanothece sp. (strain PCC 7425 / ATCC 29141), this protein is Ribosome-recycling factor.